The primary structure comprises 852 residues: Protein Shroom1 (852 aa).

Met1 is modified (N-acetylmethionine). Ser18 carries the post-translational modification Phosphoserine. Disordered stretches follow at residues 34 to 54 (SSFS…GTDL), 81 to 109 (TSPR…PLNR), and 125 to 218 (AAQA…ANQQ). Position 103 is a phosphothreonine (Thr103). The span at 125-144 (AAQAAEPPSPPASRAAYRQR) shows a compositional bias: low complexity. Residues Ser133 and Ser137 each carry the phosphoserine modification. Positions 145 to 233 (LQGAQRRVLR…SEPGKLDRVG (89 aa)) constitute an ASD1 domain. Residues 152–164 (VLRETSFQRKELR) are compositionally biased toward basic and acidic residues. Ser166, Ser190, and Ser224 each carry phosphoserine. Disordered regions lie at residues 276–320 (LPET…GSGG), 399–431 (MRSP…QRTG), 464–496 (SRPT…TAAE), and 823–852 (DLGH…LLLT). The segment covering 279-289 (TQPQGSMNLDS) has biased composition (polar residues). Residues 301–313 (ASRSRSASGEVLG) are compositionally biased toward low complexity. Residues 465-479 (RPTSHTPTGTANDNI) are compositionally biased toward polar residues. The region spanning 543–825 (EELVQELARL…QLDAIRDDLG (283 aa)) is the ASD2 domain. A compositionally biased stretch (pro residues) spans 830–852 (SPSPARPPGTCPPVQPPFPLLLT).

Belongs to the shroom family. In terms of assembly, interacts with F-actin.

The protein localises to the cytoplasm. The protein resides in the cytoskeleton. In terms of biological role, may be involved in the assembly of microtubule arrays during cell elongation. The sequence is that of Protein Shroom1 (SHROOM1) from Homo sapiens (Human).